The primary structure comprises 248 residues: 1-(5-phosphoribosyl)-5-[(5-phosphoribosylamino)methylideneamino] imidazole-4-carboxamide isomerase (248 aa).

Aspartate 8 functions as the Proton acceptor in the catalytic mechanism. The Proton donor role is filled by aspartate 127.

The protein belongs to the HisA/HisF family.

Its subcellular location is the cytoplasm. The catalysed reaction is 1-(5-phospho-beta-D-ribosyl)-5-[(5-phospho-beta-D-ribosylamino)methylideneamino]imidazole-4-carboxamide = 5-[(5-phospho-1-deoxy-D-ribulos-1-ylimino)methylamino]-1-(5-phospho-beta-D-ribosyl)imidazole-4-carboxamide. Its pathway is amino-acid biosynthesis; L-histidine biosynthesis; L-histidine from 5-phospho-alpha-D-ribose 1-diphosphate: step 4/9. The protein is 1-(5-phosphoribosyl)-5-[(5-phosphoribosylamino)methylideneamino] imidazole-4-carboxamide isomerase of Thermotoga neapolitana (strain ATCC 49049 / DSM 4359 / NBRC 107923 / NS-E).